A 92-amino-acid chain; its full sequence is Small ribosomal subunit protein uS19 (92 aa).

The protein belongs to the universal ribosomal protein uS19 family.

Its function is as follows. Protein S19 forms a complex with S13 that binds strongly to the 16S ribosomal RNA. In Thermosynechococcus vestitus (strain NIES-2133 / IAM M-273 / BP-1), this protein is Small ribosomal subunit protein uS19.